We begin with the raw amino-acid sequence, 577 residues long: Sensor histidine kinase YesM (577 aa).

The Cytoplasmic segment spans residues 1-17 (MKKRVAGWYRRMKIKDK). The chain crosses the membrane as a helical span at residues 18–38 (LFVFLSLIMAVSFLFVYSGVQ). Over 39 to 286 (YAFHVYDEQI…PFDQMFAKIS (248 aa)) the chain is Extracellular. Residues 287–307 (FMKTVIGTCFLLFFCVVLLFG) form a helical membrane-spanning segment. The Cytoplasmic portion of the chain corresponds to 308–577 (RKIANSITEP…ITIPCRNEVV (270 aa)). An HAMP domain is found at 312–368 (NSITEPIEQLVTAMKSVQHSGIEAGVSLSLPEHTQDEAGMLNRHFTVMMKRINELME). The 210-residue stretch at 365-574 (ELMEENVEKQ…RIVITIPCRN (210 aa)) folds into the Histidine kinase domain. Position 392 is a phosphohistidine; by autocatalysis (His-392).

The protein localises to the cell membrane. The catalysed reaction is ATP + protein L-histidine = ADP + protein N-phospho-L-histidine.. Functionally, member of the two-component regulatory system YesM/YesN. Probably activates YesN by phosphorylation. In Bacillus subtilis (strain 168), this protein is Sensor histidine kinase YesM (yesM).